The following is a 467-amino-acid chain: Glutamate--tRNA ligase (467 aa).

The 'HIGH' region motif lies at 9–19 (PSPTGFLHIGG). The short motif at 241–245 (KLSKR) is the 'KMSKS' region element. An ATP-binding site is contributed by Lys244.

Belongs to the class-I aminoacyl-tRNA synthetase family. Glutamate--tRNA ligase type 1 subfamily. Monomer.

The protein localises to the cytoplasm. It carries out the reaction tRNA(Glu) + L-glutamate + ATP = L-glutamyl-tRNA(Glu) + AMP + diphosphate. Catalyzes the attachment of glutamate to tRNA(Glu) in a two-step reaction: glutamate is first activated by ATP to form Glu-AMP and then transferred to the acceptor end of tRNA(Glu). This chain is Glutamate--tRNA ligase, found in Methylobacillus flagellatus (strain ATCC 51484 / DSM 6875 / VKM B-1610 / KT).